A 239-amino-acid chain; its full sequence is MGHRIKTQNRGRGGPTYRAPSHQYKAELKHLGNDKVTVRGVIIDIEHDPARHTPIALVRLEGEGKKVYLLVTEGLGVGDQVAWGPEAEVKNGNTLPISKIPTGSYICNIEARPGDGGKFVRASGVQAIIIDKTVDRVGVKMPSGKMKWFSSRCLATVGVVAGGGRGEKPFVKAGKKFHKVKSQATYWPRVRGVAMNVIDHPFGGGGHQHTGRPKTVSRGTSPGRKVGSVAARRTGRRKR.

2 disordered regions span residues 1 to 20 (MGHR…YRAP) and 202 to 239 (FGGG…RRKR).

This sequence belongs to the universal ribosomal protein uL2 family. Part of the 50S ribosomal subunit. Forms a bridge to the 30S subunit in the 70S ribosome.

One of the primary rRNA binding proteins. Required for association of the 30S and 50S subunits to form the 70S ribosome, for tRNA binding and peptide bond formation. It has been suggested to have peptidyltransferase activity; this is somewhat controversial. Makes several contacts with the 16S rRNA in the 70S ribosome. In Methanosphaerula palustris (strain ATCC BAA-1556 / DSM 19958 / E1-9c), this protein is Large ribosomal subunit protein uL2.